A 955-amino-acid chain; its full sequence is UvrABC system protein A (955 aa).

Residue 35–42 participates in ATP binding; sequence GLSGSGKS. 2 ABC transporter domains span residues 322 to 601 and 621 to 951; these read WGST…EESI and GHDN…RYLK. 654-661 lines the ATP pocket; sequence GVSGSGKS. Residues 754 to 780 form a C4-type zinc finger; the sequence is CEACQGDGLIKIEMHFLPDVYVKCDIC.

It belongs to the ABC transporter superfamily. UvrA family. Forms a heterotetramer with UvrB during the search for lesions.

Its subcellular location is the cytoplasm. The UvrABC repair system catalyzes the recognition and processing of DNA lesions. UvrA is an ATPase and a DNA-binding protein. A damage recognition complex composed of 2 UvrA and 2 UvrB subunits scans DNA for abnormalities. When the presence of a lesion has been verified by UvrB, the UvrA molecules dissociate. This Rickettsia conorii (strain ATCC VR-613 / Malish 7) protein is UvrABC system protein A.